The sequence spans 350 residues: Glycerol-1-phosphate dehydrogenase [NAD(P)+] (350 aa).

Residues 94 to 98 (GKPID) and 116 to 119 (TVAS) each bind NAD(+). Asp121 serves as a coordination point for substrate. Ser125 serves as a coordination point for NAD(+). Asp168 contacts substrate. Asp168 and His248 together coordinate Zn(2+). His252 contacts substrate. His264 serves as a coordination point for Zn(2+).

It belongs to the glycerol-1-phosphate dehydrogenase family. It depends on Zn(2+) as a cofactor.

The protein resides in the cytoplasm. The enzyme catalyses sn-glycerol 1-phosphate + NAD(+) = dihydroxyacetone phosphate + NADH + H(+). It catalyses the reaction sn-glycerol 1-phosphate + NADP(+) = dihydroxyacetone phosphate + NADPH + H(+). It functions in the pathway membrane lipid metabolism; glycerophospholipid metabolism. Catalyzes the NAD(P)H-dependent reduction of dihydroxyacetonephosphate (DHAP or glycerone phosphate) to glycerol 1-phosphate (G1P). The G1P thus generated is used as the glycerophosphate backbone of phospholipids in the cellular membranes of Archaea. This Halorubrum lacusprofundi (strain ATCC 49239 / DSM 5036 / JCM 8891 / ACAM 34) protein is Glycerol-1-phosphate dehydrogenase [NAD(P)+].